The primary structure comprises 368 residues: Nicotinate-nucleotide--dimethylbenzimidazole phosphoribosyltransferase (368 aa).

E314 (proton acceptor) is an active-site residue. Positions 344–368 are disordered; it reads DRADGADNSADSGASAGTVASDPTV. Low complexity predominate over residues 349–360; sequence ADNSADSGASAG.

This sequence belongs to the CobT family.

The catalysed reaction is 5,6-dimethylbenzimidazole + nicotinate beta-D-ribonucleotide = alpha-ribazole 5'-phosphate + nicotinate + H(+). The protein operates within nucleoside biosynthesis; alpha-ribazole biosynthesis; alpha-ribazole from 5,6-dimethylbenzimidazole: step 1/2. Catalyzes the synthesis of alpha-ribazole-5'-phosphate from nicotinate mononucleotide (NAMN) and 5,6-dimethylbenzimidazole (DMB). This is Nicotinate-nucleotide--dimethylbenzimidazole phosphoribosyltransferase from Corynebacterium efficiens (strain DSM 44549 / YS-314 / AJ 12310 / JCM 11189 / NBRC 100395).